We begin with the raw amino-acid sequence, 29 residues long: uncharacterized protein (29 aa).

A helical transmembrane segment spans residues 8-28; the sequence is FALIVVLFILLIIVGTAFVGG.

This sequence belongs to the SscA family.

The protein resides in the membrane. This is an uncharacterized protein from Bacillus subtilis (strain 168).